The primary structure comprises 320 residues: MENTRDSAAISETKYIKASNRVTIYDFIKLAKPGIIISNSIAAFGGFWIAFASAEKTLTGLAFLMTMVTAMLGTAFVMASGTVYNNYFDRHMDAKMARTRSRASVTGKMPPAMILTYGSVLGIAGLAMLYSLNPLTAFLGLAAFIFYAIIYTVWVKRTSVWSTFVGSFPGAAPPLMGYCAVTGDFSMTAVLLYTIMFLWQPPHFWAIGIRRKEEYRAAGVPLLPVVKGNHVTKIKMMQYIAVLVPVTLLFPFSLGTGHISPFYFLAALVLGGIWIKKSIKGFKTDDDVKWAKDMFVYSLIYFCLLFFIMMIDSFMMFLIR.

9 helical membrane-spanning segments follow: residues 34–54, 58–78, 112–132, 135–155, 160–180, 189–209, 234–254, 255–275, and 299–319; these read GIIISNSIAAFGGFWIAFASA, LTGLAFLMTMVTAMLGTAFVM, AMILTYGSVLGIAGLAMLYSL, LTAFLGLAAFIFYAIIYTVWV, VWSTFVGSFPGAAPPLMGYCA, AVLLYTIMFLWQPPHFWAIGI, IKMMQYIAVLVPVTLLFPFSL, GTGHISPFYFLAALVLGGIWI, and LIYFCLLFFIMMIDSFMMFLI.

It belongs to the UbiA prenyltransferase family. Protoheme IX farnesyltransferase subfamily. As to quaternary structure, interacts with CtaA.

It localises to the cell membrane. The enzyme catalyses heme b + (2E,6E)-farnesyl diphosphate + H2O = Fe(II)-heme o + diphosphate. It participates in porphyrin-containing compound metabolism; heme O biosynthesis; heme O from protoheme: step 1/1. Converts heme B (protoheme IX) to heme O by substitution of the vinyl group on carbon 2 of heme B porphyrin ring with a hydroxyethyl farnesyl side group. This Bacillus subtilis (strain 168) protein is Protoheme IX farnesyltransferase 1 (ctaB1).